Reading from the N-terminus, the 1035-residue chain is Electrogenic sodium bicarbonate cotransporter 1 (1035 aa).

The Cytoplasmic segment spans residues 1–421 (MSSEKECLEN…FASDFYDALS (421 aa)). Positions 192-217 (SRLFSTPDNGSPTMTHRNLTSTSLND) are enriched in polar residues. Disordered regions lie at residues 192-222 (SRLF…SDKP) and 348-389 (IEPP…GDSE). Positions 376–389 (APHDDGGGGHGDSE) are enriched in basic and acidic residues. A helical membrane pass occupies residues 422–446 (IQSLSAILFIYLGTVTNAITFGGLL). The Extracellular segment spans residues 447–456 (GDATENMQGV). A helical transmembrane segment spans residues 457 to 475 (LESFLGTAVSGAVFCLFGG). Position 476 (Gln476) is a topological domain, cytoplasmic. Residues 477–497 (PLTILSSTGPVLVFERLLFNF) form a discontinuously helical membrane-spanning segment. The Extracellular segment spans residues 498–505 (SKDNDFDY). A helical transmembrane segment spans residues 506–526 (LEFRLWIGLWSAFQCLILVAT). Topologically, residues 527–540 (DASFLVKYFTRFTE) are cytoplasmic. The chain crosses the membrane as a helical span at residues 541–564 (EGFSSLISFIFIYDAFKKMIKLAD). Residues 565–648 (YYPINSHFKV…GSNCKYVPDI (84 aa)) lie on the Extracellular side of the membrane. N-linked (GlcNAc...) asparagine glycosylation is found at Asn591, Asn596, Asn609, and Asn617. The chain crosses the membrane as a helical span at residues 649 to 666 (TLMSFILFLGTYTCSMAL). Over 667–681 (KKFKTSRYFPTTARK) the chain is Cytoplasmic. The helical transmembrane segment at 682–701 (LISDFAIILSILIFCGLDAL) threads the bilayer. Residues 702-735 (LGVDTPKLIVPSEFKPTSPNRGWFVPPFGGNPWW) lie on the Extracellular side of the membrane. The chain crosses the membrane as a helical span at residues 736-763 (VYLAAAIPALLVTILIFMDQQITGVIVN). The Cytoplasmic segment spans residues 764–775 (RKEHKLKKGAGY). Residues 776–792 (HLDLFWVAILMVVCSFM) traverse the membrane as a helical segment. Ala793 is a topological domain (extracellular). Residues 794-811 (LPWYVAATVISIAHIDSL) traverse the membrane as a discontinuously helical segment. The Cytoplasmic portion of the chain corresponds to 812–833 (KMETETSAPGEQPKFLGVREQR). Residues 834 to 850 (VTGTVVFLLTGLSVFMA) traverse the membrane as a helical segment. The Extracellular portion of the chain corresponds to 851-857 (PILKFIP). Residues 858-874 (MPVLYGVFLYMGVASLN) form a helical membrane-spanning segment. At 875–916 (GVQFMDRLKLLLMPPKYQPDFIYLRHVPLRRVHLFTFLQVVC) the chain is on the cytoplasmic side. The discontinuously helical intramembrane region spans 917-942 (LAMLWILKSTVAAIIFPVMILALVAV). Topologically, residues 943 to 1035 (RKAMDYFFSQ…PTFLERHTSC (93 aa)) are cytoplasmic. Residues 968–1035 (KKKEDEKKKK…PTFLERHTSC (68 aa)) form a disordered region. Positions 1007-1035 (IMEKEPFLIDSKPSDRENSPTFLERHTSC) are enriched in basic and acidic residues.

This sequence belongs to the anion exchanger (TC 2.A.31) family. As to quaternary structure, homodimer. As to expression, expressed in kidney and to a lower extent in bladder, brain, intestine, large intestine and eye.

The protein resides in the basolateral cell membrane. It localises to the cell membrane. The enzyme catalyses 2 hydrogencarbonate(out) + Na(+)(out) = 2 hydrogencarbonate(in) + Na(+)(in). The catalysed reaction is 3 hydrogencarbonate(out) + Na(+)(out) = 3 hydrogencarbonate(in) + Na(+)(in). Electrogenic sodium/bicarbonate cotransporter with a Na(+):HCO3(-) stoichiometry varying from 1:2 to 1:3. May regulate bicarbonate influx/efflux at the basolateral membrane of cells and regulate intracellular pH. This chain is Electrogenic sodium bicarbonate cotransporter 1 (SLC4A4), found in Ambystoma tigrinum (Eastern tiger salamander).